A 180-amino-acid polypeptide reads, in one-letter code: Oligoribonuclease (180 aa).

The 164-residue stretch at 7-170 (LIWIDLEMTG…DDIRESIAEL (164 aa)) folds into the Exonuclease domain. Y128 is a catalytic residue.

It belongs to the oligoribonuclease family.

The protein localises to the cytoplasm. 3'-to-5' exoribonuclease specific for small oligoribonucleotides. In Pseudomonas paraeruginosa (strain DSM 24068 / PA7) (Pseudomonas aeruginosa (strain PA7)), this protein is Oligoribonuclease.